The following is a 701-amino-acid chain: Elongation factor G (701 aa).

Residues 8 to 290 (SLYRNIGISA…AVVELLPAPT (283 aa)) form the tr-type G domain. Residues 17–24 (AHIDAGKT), 88–92 (DTPGH), and 142–145 (NKMD) contribute to the GTP site.

The protein belongs to the TRAFAC class translation factor GTPase superfamily. Classic translation factor GTPase family. EF-G/EF-2 subfamily.

It is found in the cytoplasm. Functionally, catalyzes the GTP-dependent ribosomal translocation step during translation elongation. During this step, the ribosome changes from the pre-translocational (PRE) to the post-translocational (POST) state as the newly formed A-site-bound peptidyl-tRNA and P-site-bound deacylated tRNA move to the P and E sites, respectively. Catalyzes the coordinated movement of the two tRNA molecules, the mRNA and conformational changes in the ribosome. In Neisseria gonorrhoeae (strain ATCC 700825 / FA 1090), this protein is Elongation factor G.